Reading from the N-terminus, the 94-residue chain is Sucrose operon repressor (94 aa).

The HTH lacI-type domain maps to M1–E56. The H-T-H motif DNA-binding region spans L4–N23.

Its function is as follows. Repressor for the scr operon. Binds D-fructose as an inducer. The sequence is that of Sucrose operon repressor (scrR) from Vibrio alginolyticus.